Reading from the N-terminus, the 269-residue chain is Formamidopyrimidine-DNA glycosylase (269 aa).

Pro2 serves as the catalytic Schiff-base intermediate with DNA. Glu3 functions as the Proton donor in the catalytic mechanism. The active-site Proton donor; for beta-elimination activity is the Lys57. 3 residues coordinate DNA: His90, Arg109, and Lys150. Residues Gln235–Lys269 form an FPG-type zinc finger. Arg259 functions as the Proton donor; for delta-elimination activity in the catalytic mechanism.

This sequence belongs to the FPG family. Monomer. The cofactor is Zn(2+).

It carries out the reaction Hydrolysis of DNA containing ring-opened 7-methylguanine residues, releasing 2,6-diamino-4-hydroxy-5-(N-methyl)formamidopyrimidine.. The enzyme catalyses 2'-deoxyribonucleotide-(2'-deoxyribose 5'-phosphate)-2'-deoxyribonucleotide-DNA = a 3'-end 2'-deoxyribonucleotide-(2,3-dehydro-2,3-deoxyribose 5'-phosphate)-DNA + a 5'-end 5'-phospho-2'-deoxyribonucleoside-DNA + H(+). In terms of biological role, involved in base excision repair of DNA damaged by oxidation or by mutagenic agents. Acts as a DNA glycosylase that recognizes and removes damaged bases. Has a preference for oxidized purines, such as 7,8-dihydro-8-oxoguanine (8-oxoG). Has AP (apurinic/apyrimidinic) lyase activity and introduces nicks in the DNA strand. Cleaves the DNA backbone by beta-delta elimination to generate a single-strand break at the site of the removed base with both 3'- and 5'-phosphates. The sequence is that of Formamidopyrimidine-DNA glycosylase from Cronobacter sakazakii (strain ATCC BAA-894) (Enterobacter sakazakii).